The primary structure comprises 490 residues: Probable glycine dehydrogenase (decarboxylating) subunit 2 (490 aa).

The residue at position 273 (K273) is an N6-(pyridoxal phosphate)lysine.

This sequence belongs to the GcvP family. C-terminal subunit subfamily. As to quaternary structure, the glycine cleavage system is composed of four proteins: P, T, L and H. In this organism, the P 'protein' is a heterodimer of two subunits. Requires pyridoxal 5'-phosphate as cofactor.

It carries out the reaction N(6)-[(R)-lipoyl]-L-lysyl-[glycine-cleavage complex H protein] + glycine + H(+) = N(6)-[(R)-S(8)-aminomethyldihydrolipoyl]-L-lysyl-[glycine-cleavage complex H protein] + CO2. Its function is as follows. The glycine cleavage system catalyzes the degradation of glycine. The P protein binds the alpha-amino group of glycine through its pyridoxal phosphate cofactor; CO(2) is released and the remaining methylamine moiety is then transferred to the lipoamide cofactor of the H protein. The chain is Probable glycine dehydrogenase (decarboxylating) subunit 2 from Staphylococcus aureus (strain Newman).